The chain runs to 176 residues: MPNSQAKKGLFQFYPHNLIWLGLSVLAIVLDQWTKWIASTHLNYADPVPVLPFLNWTLLHNYGAAFSFLSDAGGWQRYFFTSLAGLVSILFVFWLLRMPKKMVVLPVAIALILGGALGNLIDRITLGYVVDFIHVYYQNHHFPAFNIADSAITLGTILLLIDTFFLEKQRPKNSDA.

Helical transmembrane passes span Leu-10–Leu-30, Val-48–Phe-68, Tyr-78–Met-98, and Met-102–Asp-122. Catalysis depends on residues Asp-131 and Asp-149. A helical membrane pass occupies residues His-141–Ile-161.

It belongs to the peptidase A8 family.

The protein localises to the cell inner membrane. The catalysed reaction is Release of signal peptides from bacterial membrane prolipoproteins. Hydrolyzes -Xaa-Yaa-Zaa-|-(S,diacylglyceryl)Cys-, in which Xaa is hydrophobic (preferably Leu), and Yaa (Ala or Ser) and Zaa (Gly or Ala) have small, neutral side chains.. It participates in protein modification; lipoprotein biosynthesis (signal peptide cleavage). Its function is as follows. This protein specifically catalyzes the removal of signal peptides from prolipoproteins. In Acinetobacter baumannii (strain ATCC 17978 / DSM 105126 / CIP 53.77 / LMG 1025 / NCDC KC755 / 5377), this protein is Lipoprotein signal peptidase.